The primary structure comprises 155 residues: Ribonuclease H (155 aa).

Positions 1–142 (MLKQVEIFTD…CDELARAAAM (142 aa)) constitute an RNase H type-1 domain. 4 residues coordinate Mg(2+): Asp-10, Glu-48, Asp-70, and Asp-134.

The protein belongs to the RNase H family. Monomer. Requires Mg(2+) as cofactor.

It is found in the cytoplasm. It catalyses the reaction Endonucleolytic cleavage to 5'-phosphomonoester.. In terms of biological role, endonuclease that specifically degrades the RNA of RNA-DNA hybrids. The protein is Ribonuclease H of Escherichia coli (strain 55989 / EAEC).